Reading from the N-terminus, the 544-residue chain is Chaperonin GroEL (544 aa).

Residues 29–32 (TLGP), K50, 86–90 (DGTTT), G414, 479–481 (DAA), and D495 each bind ATP.

Belongs to the chaperonin (HSP60) family. Forms a cylinder of 14 subunits composed of two heptameric rings stacked back-to-back. Interacts with the co-chaperonin GroES.

It localises to the cytoplasm. It carries out the reaction ATP + H2O + a folded polypeptide = ADP + phosphate + an unfolded polypeptide.. In terms of biological role, together with its co-chaperonin GroES, plays an essential role in assisting protein folding. The GroEL-GroES system forms a nano-cage that allows encapsulation of the non-native substrate proteins and provides a physical environment optimized to promote and accelerate protein folding. The chain is Chaperonin GroEL from Treponema denticola (strain ATCC 35405 / DSM 14222 / CIP 103919 / JCM 8153 / KCTC 15104).